Here is a 655-residue protein sequence, read N- to C-terminus: SRSF protein kinase 1 (655 aa).

The segment at Met-1–Glu-57 is disordered. The segment covering Ala-10–Ala-22 has biased composition (basic residues). A compositionally biased stretch (acidic residues) spans Asp-40 to Glu-57. Ser-51 bears the Phosphoserine; by CK2 mark. The region spanning Tyr-80–Leu-653 is the Protein kinase domain. ATP-binding positions include Leu-86–Val-94, Lys-109, and Glu-166–Leu-168. The Proton acceptor role is filled by Asp-213. Disordered regions lie at residues Trp-238–Thr-341 and Phe-397–Ile-417. Over residues Lys-265–Lys-276 the composition is skewed to basic residues. 2 stretches are compositionally biased toward basic and acidic residues: residues Arg-277 to Glu-288 and Asn-304 to Lys-318. A phosphoserine mark is found at Ser-309, Ser-311, and Ser-333. Phosphoserine; by CK2 is present on Ser-555.

This sequence belongs to the protein kinase superfamily. CMGC Ser/Thr protein kinase family. In terms of assembly, monomer. Isoform 2 is found in a multisubunit complex containing seven proteins, named toposome, which separates entangled circular chromatin DNA during chromosome segregation. Isoform 2 interacts with DNAJC8 and AHSA1/AHA1 and this mediates formation of a complex with the Hsp70 /Hsp90 machinery. Isoform 1 is found in a complex with: DHX9, MOV10, MATR3, HNRNPU, NCL, DDX21, HSD17B4, PABPC1, HNRNPM, IGF2BP1, SYNCRIP, RPL3, VIM, YBX1, NPM1, HNRNPA2B1, HNRNPC, RPLP0, RPL7A and RALY. Isoform 2 binds to IGF2BP1, SYNCRIP, HNRNPA2B1 and HNRNPC. Isoform 1 and isoform 2 interact with SAFB which inhibits its activity. Isoform 2 interacts with SAFB2 which inhibits its activity. (Microbial infection) Isoform 2 interacts with HHV-1 ICP27 protein. Mg(2+) serves as cofactor. In terms of tissue distribution, isoform 2 is predominantly expressed in the testis but is also present at lower levels in heart, ovary, small intestine, liver, kidney, pancreas and skeletal muscle. Isoform 1 is only seen in the testis, at lower levels than isoform 2. Highly expressed in different erythroid and lymphoid cell lines, with isoform 2 being far more abundant than isoform 1.

Its subcellular location is the cytoplasm. It is found in the nucleus. The protein localises to the nucleus matrix. It localises to the microsome. The protein resides in the nucleoplasm. Its subcellular location is the nucleus speckle. It is found in the chromosome. The enzyme catalyses L-seryl-[protein] + ATP = O-phospho-L-seryl-[protein] + ADP + H(+). It carries out the reaction L-threonyl-[protein] + ATP = O-phospho-L-threonyl-[protein] + ADP + H(+). Activated by phosphorylation on Ser-51 and Ser-555. Functionally, serine/arginine-rich protein-specific kinase which specifically phosphorylates its substrates at serine residues located in regions rich in arginine/serine dipeptides, known as RS domains and is involved in the phosphorylation of SR splicing factors and the regulation of splicing. Plays a central role in the regulatory network for splicing, controlling the intranuclear distribution of splicing factors in interphase cells and the reorganization of nuclear speckles during mitosis. Can influence additional steps of mRNA maturation, as well as other cellular activities, such as chromatin reorganization in somatic and sperm cells and cell cycle progression. Isoform 2 phosphorylates SFRS2, ZRSR2, LBR and PRM1. Isoform 2 phosphorylates SRSF1 using a directional (C-terminal to N-terminal) and a dual-track mechanism incorporating both processive phosphorylation (in which the kinase stays attached to the substrate after each round of phosphorylation) and distributive phosphorylation steps (in which the kinase and substrate dissociate after each phosphorylation event). The RS domain of SRSF1 binds first to a docking groove in the large lobe of the kinase domain of SRPK1. This induces certain structural changes in SRPK1 and/or RRM2 domain of SRSF1, allowing RRM2 to bind the kinase and initiate phosphorylation. The cycles continue for several phosphorylation steps in a processive manner (steps 1-8) until the last few phosphorylation steps (approximately steps 9-12). During that time, a mechanical stress induces the unfolding of the beta-4 motif in RRM2, which then docks at the docking groove of SRPK1. This also signals RRM2 to begin to dissociate, which facilitates SRSF1 dissociation after phosphorylation is completed. Isoform 2 can mediate hepatitis B virus (HBV) core protein phosphorylation. It plays a negative role in the regulation of HBV replication through a mechanism not involving the phosphorylation of the core protein but by reducing the packaging efficiency of the pregenomic RNA (pgRNA) without affecting the formation of the viral core particles. Isoform 1 and isoform 2 can induce splicing of exon 10 in MAPT/TAU. The ratio of isoform 1/isoform 2 plays a decisive role in determining cell fate in K-562 leukaemic cell line: isoform 2 favors proliferation where as isoform 1 favors differentiation. The polypeptide is SRSF protein kinase 1 (Homo sapiens (Human)).